The chain runs to 284 residues: Acetylglutamate kinase (284 aa).

Residues 64–65 (GG), Arg-86, and Asn-181 each bind substrate.

It belongs to the acetylglutamate kinase family. ArgB subfamily.

It localises to the cytoplasm. It carries out the reaction N-acetyl-L-glutamate + ATP = N-acetyl-L-glutamyl 5-phosphate + ADP. It functions in the pathway amino-acid biosynthesis; L-arginine biosynthesis; N(2)-acetyl-L-ornithine from L-glutamate: step 2/4. In terms of biological role, catalyzes the ATP-dependent phosphorylation of N-acetyl-L-glutamate. The protein is Acetylglutamate kinase of Nitratiruptor sp. (strain SB155-2).